A 368-amino-acid polypeptide reads, in one-letter code: 1-aminocyclopropane-1-carboxylate synthase (368 aa).

Lys-230 carries the post-translational modification N6-(pyridoxal phosphate)lysine.

The protein belongs to the class-I pyridoxal-phosphate-dependent aminotransferase family. As to quaternary structure, homodimer. Requires pyridoxal 5'-phosphate as cofactor.

It catalyses the reaction S-adenosyl-L-methionine = 1-aminocyclopropane-1-carboxylate + S-methyl-5'-thioadenosine + H(+). It functions in the pathway alkene biosynthesis; ethylene biosynthesis via S-adenosyl-L-methionine; ethylene from S-adenosyl-L-methionine: step 1/2. In terms of biological role, catalyzes the formation of 1-aminocyclopropane-1-carboxylate, a direct precursor of ethylene in higher plants. The sequence is that of 1-aminocyclopropane-1-carboxylate synthase (ACS5) from Vigna radiata var. radiata (Mung bean).